A 191-amino-acid chain; its full sequence is MKQLFLIIGAPGSGKTTDAELISKNNSETIAHFSTGDLLRAESAKKTERGLLIEKFTSQGELVPLEIVVETILSAIKSSSKRIILIDGYPRSVEQMQALDKELNAQNEVILKSVIEVEVSENTAKERVLGRSRGADDNEKVFHNRMRVFLDPLAEIQNFYKAKHLHKVINGERSIEEIVHEMQEYILSFGN.

12–17 is a binding site for ATP; it reads GSGKTT. The NMP stretch occupies residues 34 to 63; sequence STGDLLRAESAKKTERGLLIEKFTSQGELV. AMP-binding positions include Thr35, Arg40, 61–63, 88–91, and Gln95; these read ELV and GYPR. The segment at 130-136 is LID; sequence GRSRGAD. Position 131 (Arg131) interacts with ATP. Residues Arg133 and Arg145 each contribute to the AMP site. Arg173 is an ATP binding site.

Belongs to the adenylate kinase family. Monomer.

The protein localises to the cytoplasm. It catalyses the reaction AMP + ATP = 2 ADP. It functions in the pathway purine metabolism; AMP biosynthesis via salvage pathway; AMP from ADP: step 1/1. In terms of biological role, catalyzes the reversible transfer of the terminal phosphate group between ATP and AMP. Plays an important role in cellular energy homeostasis and in adenine nucleotide metabolism. The polypeptide is Adenylate kinase (Helicobacter pylori (strain HPAG1)).